The primary structure comprises 844 residues: RPA-related protein RADX (844 aa).

The segment at residues 228-331 (WHNRKNFPAL…LISTMEICLN (104 aa)) is a DNA-binding region (OB). Disordered stretches follow at residues 571-609 (PASETLQNASPPSTSQAAAKEGHYHERGSKRSQDDRPMD) and 626-664 (GPTANPVPVPQPHSSAQMKGNKPNIPSRENSTANATGKS). Residues 572–587 (ASETLQNASPPSTSQA) are compositionally biased toward polar residues. A compositionally biased stretch (basic and acidic residues) spans 590–608 (KEGHYHERGSKRSQDDRPM). Positions 652–662 (SRENSTANATG) are enriched in polar residues.

The protein localises to the chromosome. Functionally, single-stranded DNA-binding protein recruited to replication forks to maintain genome stability. Prevents fork collapse by antagonizing the accumulation of RAD51 at forks to ensure the proper balance of fork remodeling and protection without interfering with the capacity of cells to complete homologous recombination of double-strand breaks. The sequence is that of RPA-related protein RADX from Rattus norvegicus (Rat).